The primary structure comprises 313 residues: Formimidoylglutamase (313 aa).

Positions 130, 155, 157, 159, 241, and 243 each coordinate Mn(2+).

Belongs to the arginase family. Requires Mn(2+) as cofactor.

It catalyses the reaction N-formimidoyl-L-glutamate + H2O = formamide + L-glutamate. Its pathway is amino-acid degradation; L-histidine degradation into L-glutamate; L-glutamate from N-formimidoyl-L-glutamate (hydrolase route): step 1/1. Functionally, catalyzes the conversion of N-formimidoyl-L-glutamate to L-glutamate and formamide. The protein is Formimidoylglutamase of Salmonella typhi.